A 391-amino-acid chain; its full sequence is FLUCTUATING-LIGHT-ACCLIMATION protein 1, chloroplastic (391 aa).

The transit peptide at M1–S48 directs the protein to the chloroplast. A helical membrane pass occupies residues A87–A107. Over residues S116–S138 the composition is skewed to low complexity. Residues S116 to P140 form a disordered region. 2 helical membrane-spanning segments follow: residues F168–L188 and Y321–G341.

It belongs to the FLAP family.

It is found in the plastid. The protein localises to the chloroplast thylakoid membrane. Its subcellular location is the chloroplast membrane. The protein resides in the chloroplast envelope. Its function is as follows. Monitors proton H(+) homeostasis in chloroplasts to manipulate luminal acidification levels appropriately to balance photoprotection and photochemical processes. Required during acclimation response to fluctuating light (e.g. photosynthetic activity optimization) by controlling non-photochemical quenching (NPQ); acts independently from DLDG1. The chain is FLUCTUATING-LIGHT-ACCLIMATION protein 1, chloroplastic from Arabidopsis thaliana (Mouse-ear cress).